The sequence spans 315 residues: Ribosomal RNA small subunit methyltransferase H (315 aa).

S-adenosyl-L-methionine-binding positions include 36-38, D56, F80, D102, and Q109; that span reads GGH.

This sequence belongs to the methyltransferase superfamily. RsmH family.

It localises to the cytoplasm. The enzyme catalyses cytidine(1402) in 16S rRNA + S-adenosyl-L-methionine = N(4)-methylcytidine(1402) in 16S rRNA + S-adenosyl-L-homocysteine + H(+). Its function is as follows. Specifically methylates the N4 position of cytidine in position 1402 (C1402) of 16S rRNA. The sequence is that of Ribosomal RNA small subunit methyltransferase H from Proteus mirabilis (strain HI4320).